The following is a 523-amino-acid chain: WD repeat-containing protein WDS homolog (523 aa).

Residues 16–48 enclose the LisH domain; sequence KKHEFIRILVQCLYSLGFKNSASCLEFESKILY. Residues 49–107 form the CTLH domain; the sequence is KTADSEFLEKQVLSGNWDSCVQVLDRIFDNSMDDTRNTALYLVFKQCLLEYLKRGDVSL. WD repeat units lie at residues 222–261, 267–306, 310–353, 355–394, 395–434, 438–480, and 483–523; these read AHKNEVWFVQFSNSGKYLATASSDCTAIIWKVLDDNKVEL, SHQNPVSFVSWSPDDTKLLTCGNAEVLKLWDVDTGVLRHT, NNTG…KAWR, TRIPKVVDLAVTPDGESMITVFSDKEIRILNLETKVERVI, SEEQPITSLSISGDGKFFIVNLSCQEIHLWDLAGEWKQPL, GHRQ…PLEV, and GHSM…KPLN.

Interacts with RANBPM.

The protein localises to the cytoplasm. The protein is WD repeat-containing protein WDS homolog of Arabidopsis thaliana (Mouse-ear cress).